We begin with the raw amino-acid sequence, 125 residues long: Large ribosomal subunit protein bL12 (125 aa).

The protein belongs to the bacterial ribosomal protein bL12 family. Homodimer. Part of the ribosomal stalk of the 50S ribosomal subunit. Forms a multimeric L10(L12)X complex, where L10 forms an elongated spine to which 2 to 4 L12 dimers bind in a sequential fashion. Binds GTP-bound translation factors.

Its function is as follows. Forms part of the ribosomal stalk which helps the ribosome interact with GTP-bound translation factors. Is thus essential for accurate translation. This chain is Large ribosomal subunit protein bL12, found in Ruthia magnifica subsp. Calyptogena magnifica.